The sequence spans 390 residues: GLH-binding kinase 1 (390 aa).

One can recognise a Protein kinase domain in the interval 38-338 (YVNLSFLNAG…VEDALNHPYV (301 aa)). ATP is bound by residues 44 to 52 (LNAGAQGTV) and K67. Catalysis depends on D164, which acts as the Proton acceptor. At S198 the chain carries Phosphoserine. Y200 bears the Phosphotyrosine mark.

The protein belongs to the protein kinase superfamily. CMGC Ser/Thr protein kinase family. MAP kinase subfamily. In terms of assembly, interacts with glh-1, glh-2 (via C-terminus), glh-3 (via C-terminus) and glh-4 (via C-terminus). Interacts with csn-5; the interaction may prevent glh-1 degradation induced by kgb-1. Interacts with fos-1. Requires Mg(2+) as cofactor. May be phosphorylated by mek-1 on Ser-198 and/or Tyr-200. Phosphorylation is induced upon Cu(2+) and arsenite-mediated cell stimulation and by fasting. As to expression, expressed in somatic and germline tissues.

It is found in the cytoplasm. The enzyme catalyses L-seryl-[protein] + ATP = O-phospho-L-seryl-[protein] + ADP + H(+). The catalysed reaction is L-threonyl-[protein] + ATP = O-phospho-L-threonyl-[protein] + ADP + H(+). Activated by mek-1 mediated phosphorylation. No differences in basal activation between larvae and adults. Inhibited by phosphatase vhp-1. In terms of biological role, mitogen-activated protein kinase which is an essential component of the JNK pathway composed of mlk-1, mek-1 and kgb-1. Phosphorylates the transcription factor fos-1 which prevents fos-1 dimerization and promoter binding and results in activation of target genes including F53A9.2/kreg-1 and lys-3/kreg-2. Phosphorylates jun-1 and activates the AP-1 transcription factor which is a heterodimer of jun-1 and fos-1. Phosphorylates glh-1 in vitro which may play a role in controlling glh-1 protein levels in the germline by targeting it for degradation by the proteasome. Required for oogenesis and probably also for spermatogenesis. Involved in the response to environmental stress such as heavy metals, infection and protein folding stress in an age-dependent manner. In larvae, has a protective role which becomes detrimental in adults. May control susceptibility to infection, heavy metal stress and premature lethality by regulating daf-16 cellular localization. Involved in the transcriptional response to bacterial pore-forming toxins and to fasting. Required for fasting-induced longevity. Involved in axon regeneration after injury downstream of tyrosine receptor svh-2. The chain is GLH-binding kinase 1 from Caenorhabditis elegans.